Reading from the N-terminus, the 56-residue chain is UPF0434 protein CBUD_1597.1 (56 aa).

Belongs to the UPF0434 family.

The chain is UPF0434 protein CBUD_1597.1 from Coxiella burnetii (strain Dugway 5J108-111).